Consider the following 142-residue polypeptide: Large ribosomal subunit protein uL11 (142 aa).

This sequence belongs to the universal ribosomal protein uL11 family. Part of the ribosomal stalk of the 50S ribosomal subunit. Interacts with L10 and the large rRNA to form the base of the stalk. L10 forms an elongated spine to which L12 dimers bind in a sequential fashion forming a multimeric L10(L12)X complex. One or more lysine residues are methylated.

In terms of biological role, forms part of the ribosomal stalk which helps the ribosome interact with GTP-bound translation factors. The polypeptide is Large ribosomal subunit protein uL11 (Mesoplasma florum (strain ATCC 33453 / NBRC 100688 / NCTC 11704 / L1) (Acholeplasma florum)).